A 241-amino-acid polypeptide reads, in one-letter code: High mobility group B protein 7 (241 aa).

2 stretches are compositionally biased toward polar residues: residues 1–11 and 20–29; these read MAGPSTTSNAP and ETSSNTSTTL. 3 disordered regions span residues 1–30, 75–116, and 174–241; these read MAGP…TTLR, TQAE…NKPK, and EYNK…LDDY. Positions 77-90 are enriched in basic and acidic residues; sequence AEAKKKPAEKKKTT. The segment at residues 115–183 is a DNA-binding region (HMG box); the sequence is PKRPLTAFFI…EYNKSLESND (69 aa). Acidic residues-rich tracts occupy residues 182–221 and 229–241; these read NDAD…ENTD and GKEE…LDDY.

It belongs to the HMGB family. Phosphorylated. As to expression, expressed at low levels in lateral roots, root tips, cotyledons, leaves and flowers (including pedicels, but excluding styles).

It localises to the nucleus. In terms of biological role, binds preferentially double-stranded supercoiled DNA. Required for karyogamy during female gametophyte development, when the two polar nuclei fuse to form the diploid central cell nucleus. The polypeptide is High mobility group B protein 7 (HMGB7) (Arabidopsis thaliana (Mouse-ear cress)).